Reading from the N-terminus, the 613-residue chain is Dihydroxy-acid dehydratase (613 aa).

Asp81 provides a ligand contact to Mg(2+). Cys122 serves as a coordination point for [2Fe-2S] cluster. Residues Asp123 and Lys124 each coordinate Mg(2+). Position 124 is an N6-carboxylysine (Lys124). Cys193 provides a ligand contact to [2Fe-2S] cluster. Glu489 lines the Mg(2+) pocket. Ser515 (proton acceptor) is an active-site residue.

This sequence belongs to the IlvD/Edd family. In terms of assembly, homodimer. [2Fe-2S] cluster is required as a cofactor. The cofactor is Mg(2+).

The catalysed reaction is (2R)-2,3-dihydroxy-3-methylbutanoate = 3-methyl-2-oxobutanoate + H2O. It carries out the reaction (2R,3R)-2,3-dihydroxy-3-methylpentanoate = (S)-3-methyl-2-oxopentanoate + H2O. The protein operates within amino-acid biosynthesis; L-isoleucine biosynthesis; L-isoleucine from 2-oxobutanoate: step 3/4. It functions in the pathway amino-acid biosynthesis; L-valine biosynthesis; L-valine from pyruvate: step 3/4. Functionally, functions in the biosynthesis of branched-chain amino acids. Catalyzes the dehydration of (2R,3R)-2,3-dihydroxy-3-methylpentanoate (2,3-dihydroxy-3-methylvalerate) into 2-oxo-3-methylpentanoate (2-oxo-3-methylvalerate) and of (2R)-2,3-dihydroxy-3-methylbutanoate (2,3-dihydroxyisovalerate) into 2-oxo-3-methylbutanoate (2-oxoisovalerate), the penultimate precursor to L-isoleucine and L-valine, respectively. This Pseudomonas putida (strain ATCC 47054 / DSM 6125 / CFBP 8728 / NCIMB 11950 / KT2440) protein is Dihydroxy-acid dehydratase.